A 1284-amino-acid chain; its full sequence is Kinesin-like protein KIN-4C (1284 aa).

The Kinesin motor domain occupies 12–364 (SVKVVVNIRP…LKYANRARNI (353 aa)). 91 to 98 (GQTGSGKT) serves as a coordination point for ATP. 3 coiled-coil regions span residues 407–445 (SAAL…EQLA), 561–711 (RDHS…QFRS), and 911–950 (MCKE…NMLL). 2 disordered regions span residues 1040 to 1070 (RRQT…SQEK) and 1158 to 1284 (MSEK…NHLR). Polar residues predominate over residues 1043–1070 (TVSSHLNPNPGSGTTQKSAKSEMASQEK). 2 stretches are compositionally biased toward basic and acidic residues: residues 1158–1172 (MSEK…RKPL) and 1275–1284 (NANEKENHLR).

This sequence belongs to the TRAFAC class myosin-kinesin ATPase superfamily. Kinesin family. KIN-4 subfamily. Homodimer.

Microtubule-dependent motor protein involved in the control of the oriented deposition of cellulose microfibrils. The sequence is that of Kinesin-like protein KIN-4C from Oryza sativa subsp. japonica (Rice).